Reading from the N-terminus, the 98-residue chain is Small ribosomal subunit protein eS24 (98 aa).

It belongs to the eukaryotic ribosomal protein eS24 family. As to quaternary structure, part of the 30S ribosomal subunit.

This Thermococcus kodakarensis (strain ATCC BAA-918 / JCM 12380 / KOD1) (Pyrococcus kodakaraensis (strain KOD1)) protein is Small ribosomal subunit protein eS24.